Reading from the N-terminus, the 90-residue chain is Probable Fe(2+)-trafficking protein (90 aa).

Belongs to the Fe(2+)-trafficking protein family.

Functionally, could be a mediator in iron transactions between iron acquisition and iron-requiring processes, such as synthesis and/or repair of Fe-S clusters in biosynthetic enzymes. The polypeptide is Probable Fe(2+)-trafficking protein (Aliivibrio fischeri (strain ATCC 700601 / ES114) (Vibrio fischeri)).